Reading from the N-terminus, the 588-residue chain is Arginine--tRNA ligase (588 aa).

Positions 129 to 139 (PNIAKEMHVGH) match the 'HIGH' region motif.

Belongs to the class-I aminoacyl-tRNA synthetase family. Monomer.

It localises to the cytoplasm. The catalysed reaction is tRNA(Arg) + L-arginine + ATP = L-arginyl-tRNA(Arg) + AMP + diphosphate. This is Arginine--tRNA ligase from Frankia casuarinae (strain DSM 45818 / CECT 9043 / HFP020203 / CcI3).